The primary structure comprises 372 residues: Ligninase LG3 (372 aa).

The first 21 residues, 1–21 (MAFKQLFAAISLALSLSAANA), serve as a signal peptide directing secretion. The propeptide occupies 22–28 (AAVIEKR). 2 cysteine pairs are disulfide-bonded: cysteine 31–cysteine 43 and cysteine 62–cysteine 148. Histidine 75 serves as the catalytic Proton acceptor. Residues aspartate 76, glycine 94, aspartate 96, and serine 98 each coordinate Ca(2+). Histidine 204 serves as a coordination point for heme b. Residues serine 205, aspartate 222, threonine 224, isoleucine 227, and aspartate 229 each coordinate Ca(2+). Cysteines 277 and 345 form a disulfide. Asparagine 285 carries an N-linked (GlcNAc...) asparagine glycan. Low complexity predominate over residues 350 to 361 (FPTLTTLPGPET). A disordered region spans residues 350–372 (FPTLTTLPGPETSVQRIPPPPGA).

It belongs to the peroxidase family. Ligninase subfamily. Heme b serves as cofactor. Requires Ca(2+) as cofactor.

It catalyses the reaction 1-(3,4-dimethoxyphenyl)-2-(2-methoxyphenoxy)propane-1,3-diol + H2O2 = 3,4-dimethoxybenzaldehyde + guaiacol + glycolaldehyde + H2O. It carries out the reaction 2 (3,4-dimethoxyphenyl)methanol + H2O2 = 2 (3,4-dimethoxyphenyl)methanol radical + 2 H2O. It functions in the pathway secondary metabolite metabolism; lignin degradation. In terms of biological role, depolymerization of lignin. Catalyzes the C(alpha)-C(beta) cleavage of the propyl side chains of lignin. This Phanerodontia chrysosporium (White-rot fungus) protein is Ligninase LG3 (GLG3).